A 459-amino-acid polypeptide reads, in one-letter code: Argininosuccinate lyase (459 aa).

The protein belongs to the lyase 1 family. Argininosuccinate lyase subfamily.

The protein localises to the cytoplasm. It carries out the reaction 2-(N(omega)-L-arginino)succinate = fumarate + L-arginine. The protein operates within amino-acid biosynthesis; L-arginine biosynthesis; L-arginine from L-ornithine and carbamoyl phosphate: step 3/3. This Staphylococcus aureus (strain USA300) protein is Argininosuccinate lyase.